We begin with the raw amino-acid sequence, 556 residues long: Endoplasmic reticulum membrane protein 65 (556 aa).

At 1–87 (MQHKDTAVAK…IRIPMFLEKF (87 aa)) the chain is on the cytoplasmic side. Phosphoserine is present on Ser-22. Residues 88–108 (MLFALLTSLDCFLYYFTVLPI) traverse the membrane as a helical segment. At 109 to 151 (RLIKGYVKQFKSYRQHYRLQQRSGHKNKIPFRYRITSREYKER) the chain is on the lumenal side. The helical transmembrane segment at 152 to 172 (CMIFIIVISSILLSKLDTSKL) threads the bilayer. The Cytoplasmic portion of the chain corresponds to 173–224 (YHRIKRQSTMKLYMLFSVLEMADKMLASLGQSLLTVMLSRKNSERILLHKCL). The helical transmembrane segment at 225-245 (LVSMSLTYVTIHGYVLVYQAI) threads the bilayer. Over 246–330 (SLNIAVNSYS…INFWSPRSTL (85 aa)) the chain is Lumenal. Asn-318 carries an N-linked (GlcNAc...) asparagine glycan. The chain crosses the membrane as a helical span at residues 331–351 (SIVINILCGPMVSVVGSEVLV). Residues 352-391 (DWAKHAYITKFNRIRPQIYDKFYYIIYKDYSTRTHKLEDR) are Cytoplasmic-facing. The chain crosses the membrane as a helical span at residues 392 to 412 (LGLPLPAFVVLFIVMVRPTLF). The Lumenal portion of the chain corresponds to 413–428 (KSSEPSYLPSLFRILF). Residues 429–449 (MGASVFLLALLAKFTLDLILI) form a helical membrane-spanning segment. Topologically, residues 450 to 556 (KWSKRIEQRF…RYKMVSKRIW (107 aa)) are cytoplasmic.

This sequence belongs to the TAPT1 family. In terms of assembly, interacts with SLP1.

The protein localises to the endoplasmic reticulum membrane. Its subcellular location is the mitochondrion. In terms of biological role, may be involved in membrane protein folding. This Saccharomyces cerevisiae (strain ATCC 204508 / S288c) (Baker's yeast) protein is Endoplasmic reticulum membrane protein 65.